Reading from the N-terminus, the 391-residue chain is Imidazolonepropionase (391 aa).

Residues histidine 72 and histidine 74 each contribute to the Fe(3+) site. Zn(2+)-binding residues include histidine 72 and histidine 74. 4-imidazolone-5-propanoate-binding residues include arginine 81, tyrosine 139, and histidine 166. Residue tyrosine 139 participates in N-formimidoyl-L-glutamate binding. Histidine 229 serves as a coordination point for Fe(3+). Histidine 229 provides a ligand contact to Zn(2+). Glutamine 232 lines the 4-imidazolone-5-propanoate pocket. Position 303 (aspartate 303) interacts with Fe(3+). Aspartate 303 is a Zn(2+) binding site. Residues asparagine 305 and glycine 307 each contribute to the N-formimidoyl-L-glutamate site. Residue serine 308 participates in 4-imidazolone-5-propanoate binding.

This sequence belongs to the metallo-dependent hydrolases superfamily. HutI family. Zn(2+) serves as cofactor. Requires Fe(3+) as cofactor.

Its subcellular location is the cytoplasm. It carries out the reaction 4-imidazolone-5-propanoate + H2O = N-formimidoyl-L-glutamate. Its pathway is amino-acid degradation; L-histidine degradation into L-glutamate; N-formimidoyl-L-glutamate from L-histidine: step 3/3. Its function is as follows. Catalyzes the hydrolytic cleavage of the carbon-nitrogen bond in imidazolone-5-propanoate to yield N-formimidoyl-L-glutamate. It is the third step in the universal histidine degradation pathway. The protein is Imidazolonepropionase of Streptomyces coelicolor (strain ATCC BAA-471 / A3(2) / M145).